The sequence spans 124 residues: Probable glycine cleavage system H protein (124 aa).

The Lipoyl-binding domain maps to 25-106 (TATIGITDYA…PYGSWLVKMA (82 aa)). Position 66 is an N6-lipoyllysine (Lys66).

The protein belongs to the GcvH family. In terms of assembly, the glycine cleavage system is composed of four proteins: P, T, L and H. It depends on (R)-lipoate as a cofactor.

The glycine cleavage system catalyzes the degradation of glycine. The H protein shuttles the methylamine group of glycine from the P protein to the T protein. This chain is Probable glycine cleavage system H protein, found in Thermoplasma acidophilum (strain ATCC 25905 / DSM 1728 / JCM 9062 / NBRC 15155 / AMRC-C165).